Reading from the N-terminus, the 667-residue chain is DNA ligase (667 aa).

NAD(+) contacts are provided by residues 32–36 (DKDYD) and 80–81 (SL). The active-site N6-AMP-lysine intermediate is the lysine 121. Residues arginine 143, glutamate 178, and lysine 314 each contribute to the NAD(+) site. 4 residues coordinate Zn(2+): cysteine 407, cysteine 410, cysteine 423, and cysteine 429. A BRCT domain is found at 587 to 667 (IVESIFKDKT…EFEKMLGRES (81 aa)).

Belongs to the NAD-dependent DNA ligase family. LigA subfamily. Mg(2+) is required as a cofactor. It depends on Mn(2+) as a cofactor.

It carries out the reaction NAD(+) + (deoxyribonucleotide)n-3'-hydroxyl + 5'-phospho-(deoxyribonucleotide)m = (deoxyribonucleotide)n+m + AMP + beta-nicotinamide D-nucleotide.. Its function is as follows. DNA ligase that catalyzes the formation of phosphodiester linkages between 5'-phosphoryl and 3'-hydroxyl groups in double-stranded DNA using NAD as a coenzyme and as the energy source for the reaction. It is essential for DNA replication and repair of damaged DNA. This is DNA ligase from Clostridium botulinum (strain Eklund 17B / Type B).